We begin with the raw amino-acid sequence, 511 residues long: Lysine--tRNA ligase (511 aa).

Mg(2+) contacts are provided by glutamate 421 and glutamate 428.

Belongs to the class-II aminoacyl-tRNA synthetase family. As to quaternary structure, homodimer. Requires Mg(2+) as cofactor.

The protein localises to the cytoplasm. It catalyses the reaction tRNA(Lys) + L-lysine + ATP = L-lysyl-tRNA(Lys) + AMP + diphosphate. This Herminiimonas arsenicoxydans protein is Lysine--tRNA ligase.